The following is a 164-amino-acid chain: HTH-type transcriptional regulator IscR (164 aa).

The HTH rrf2-type domain occupies 2–131; the sequence is RLTSKGRYAV…SSISLEELVN (130 aa). The segment at residues 28 to 51 is a DNA-binding region (H-T-H motif); that stretch reads LADISERQGISLSYLEQLFSRLRK. Residues C92, C98, and C104 each contribute to the [2Fe-2S] cluster site. Positions 141 to 164 are disordered; it reads RQDNDKRRAPNGRAQETINVNLRP. Positions 154 to 164 are enriched in polar residues; it reads AQETINVNLRP.

It depends on [2Fe-2S] cluster as a cofactor.

Regulates the transcription of several operons and genes involved in the biogenesis of Fe-S clusters and Fe-S-containing proteins. This Photorhabdus laumondii subsp. laumondii (strain DSM 15139 / CIP 105565 / TT01) (Photorhabdus luminescens subsp. laumondii) protein is HTH-type transcriptional regulator IscR.